The chain runs to 753 residues: Inactive protein-tyrosine phosphatase egg-5 (753 aa).

Disordered stretches follow at residues 26–46 (TSLQSFCSGNTDDSSADSTDN) and 77–116 (RKKVKKLAQKDRRSKERLNGNSEEDAIEVPRGAPSTYAAP). Low complexity predominate over residues 35-46 (NTDDSSADSTDN). Over residues 84 to 94 (AQKDRRSKERL) the composition is skewed to basic and acidic residues. The region spanning 408-661 (MERRFEILEN…IFVHRLVAFF (254 aa)) is the Tyrosine-protein phosphatase domain.

Belongs to the protein-tyrosine phosphatase family. Part of a complex, consisting of pseudophosphatases egg-3, egg-4, egg-5 and kinase mbk-2; this complex is required for the oocyte-to-zygote transition. Interacts (via tyrosine-protein phosphatase domain) with kinase mbk-2 (via 'Tyr-619' and 'Tyr-621'); mbk-2 tyrosine phosphorylation enhances the interaction.

It localises to the cytoplasm. The protein resides in the cell cortex. Inactive phosphatase which acts redundantly with egg-4 in the oocyte-to-zygote transition. Required for polarized cortical actin cytoskeleton rearrangement in the oocyte before and after fertilization. Together with egg-4, required for the cortical localization of kinase mbk-2 in maturing oocyte until the end of meiosis I. Also required for kinase mbk-2, pseudophosphatase egg-3 and chitin synthase chs-1 localization to cytoplasmic foci after fertilization. In Caenorhabditis elegans, this protein is Inactive protein-tyrosine phosphatase egg-5.